Reading from the N-terminus, the 173-residue chain is Crossover junction endodeoxyribonuclease RuvC (173 aa).

Catalysis depends on residues Asp-8, Glu-67, and Asp-139. The Mg(2+) site is built by Asp-8, Glu-67, and Asp-139.

The protein belongs to the RuvC family. In terms of assembly, homodimer which binds Holliday junction (HJ) DNA. The HJ becomes 2-fold symmetrical on binding to RuvC with unstacked arms; it has a different conformation from HJ DNA in complex with RuvA. In the full resolvosome a probable DNA-RuvA(4)-RuvB(12)-RuvC(2) complex forms which resolves the HJ. Requires Mg(2+) as cofactor.

The protein resides in the cytoplasm. The enzyme catalyses Endonucleolytic cleavage at a junction such as a reciprocal single-stranded crossover between two homologous DNA duplexes (Holliday junction).. Functionally, the RuvA-RuvB-RuvC complex processes Holliday junction (HJ) DNA during genetic recombination and DNA repair. Endonuclease that resolves HJ intermediates. Cleaves cruciform DNA by making single-stranded nicks across the HJ at symmetrical positions within the homologous arms, yielding a 5'-phosphate and a 3'-hydroxyl group; requires a central core of homology in the junction. The consensus cleavage sequence is 5'-(A/T)TT(C/G)-3'. Cleavage occurs on the 3'-side of the TT dinucleotide at the point of strand exchange. HJ branch migration catalyzed by RuvA-RuvB allows RuvC to scan DNA until it finds its consensus sequence, where it cleaves and resolves the cruciform DNA. The protein is Crossover junction endodeoxyribonuclease RuvC of Yersinia pseudotuberculosis serotype O:1b (strain IP 31758).